Here is a 440-residue protein sequence, read N- to C-terminus: GTPase Der (440 aa).

2 EngA-type G domains span residues 3–167 (PIIA…PYDR) and 176–351 (TRIA…EQYC). GTP-binding positions include 9–16 (GRPNVGKS), 56–60 (DTGGF), 119–122 (NKVD), 182–189 (GRPNVGKS), 229–233 (DTAGI), and 294–297 (NKWD). The 85-residue stretch at 352–436 (KRVTTGELNR…PLKLIFRGRD (85 aa)) folds into the KH-like domain.

The protein belongs to the TRAFAC class TrmE-Era-EngA-EngB-Septin-like GTPase superfamily. EngA (Der) GTPase family. In terms of assembly, associates with the 50S ribosomal subunit.

In terms of biological role, GTPase that plays an essential role in the late steps of ribosome biogenesis. This chain is GTPase Der, found in Citrifermentans bemidjiense (strain ATCC BAA-1014 / DSM 16622 / JCM 12645 / Bem) (Geobacter bemidjiensis).